Reading from the N-terminus, the 1295-residue chain is Protein glp-1 (1295 aa).

The N-terminal stretch at 1-15 (MRVLLILLAFFAPIA) is a signal peptide. Topologically, residues 16-764 (SQLMGGECGR…NEIDEGWSRS (749 aa)) are extracellular. EGF-like domains are found at residues 19–58 (MGGE…AFCE), 117–152 (GVNP…SYCE), 154–190 (GIDH…RYCE), and 190–230 (ERTE…EFCN). Cystine bridges form between C23-C35, C29-C46, C48-C57, C121-C131, C126-C140, C142-C151, C158-C169, C163-C178, C180-C189, C201-C206, C220-C229, C236-C248, C242-C257, C259-C268, C275-C286, C280-C296, C298-C307, C329-C342, C336-C347, C349-C358, C373-C384, C378-C394, C396-C405, C411-C422, C416-C431, C433-C442, C450-C461, C455-C467, C469-C478, C496-C519, C501-C514, C510-C526, C536-C560, C542-C555, C551-C567, C582-C595, and C591-C607. The EGF-like 5; calcium-binding domain occupies 232 to 269 (DKNECLIEETCVNNSTCFNLHGDFTCTCKPGYAGKYCE). N-linked (GlcNAc...) asparagine glycosylation is found at N244 and N245. EGF-like domains lie at 271–308 (AIDM…QRCE), 316–359 (GGIH…DRCE), 369–406 (DIQS…LNCE), 407–443 (QHLL…DYCE), and 446–479 (DRQL…PTCE). N333 carries N-linked (GlcNAc...) asparagine glycosylation. Residue N381 is glycosylated (N-linked (GlcNAc...) asparagine). 3 LNR repeats span residues 496 to 532 (CEQR…GQRP), 536 to 577 (CQYP…CPAH), and 581 to 612 (HCIE…NGTE). N-linked (GlcNAc...) asparagine glycans are attached at residues N609 and N675. The chain crosses the membrane as a helical span at residues 765–786 (QVILFACIAFLAFGTVVAGVIA). Over 787–1295 (KNGPERSRKR…AEQMNGSFYC (509 aa)) the chain is Cytoplasmic. ANK repeat units lie at residues 961–990 (DENT…NPTI), 994–1023 (SERS…LLKE), 1030–1062 (NGMT…KLDY), 1074–1103 (KGRT…NKDK), and 1107–1136 (DGRT…SLGI). The disordered stretch occupies residues 1177 to 1244 (IVKSGHGAKS…TTSTPNRMET (68 aa)). Positions 1201–1210 (KTPTSAASSR) are enriched in polar residues. Low complexity predominate over residues 1221-1239 (DGSFSSPSPHYYPTTTSTP).

In terms of assembly, interacts with sel-10. As to quaternary structure, when activated, the glp-1/Notch intracellular domain (NICD) may become a component of a complex consisting of at least the NICD, lag-1 and lag-3. Post-translationally, upon binding its ligands, it is cleaved (S2 cleavage) in its extracellular domain, close to the transmembrane domain. S2 cleavage is probably mediated by the metalloproteases adm-4 and sup-17. It is then cleaved (S3 cleavage) downstream of its transmembrane domain, releasing it from the cell membrane; S3 cleavage requires a multiprotein gamma-secretase complex, which may include presenilin sel-12. As to expression, expressed in the distal mitotic region of the germ line. May be absent from the gonadal distal tip cell (DTC).

Its subcellular location is the cell membrane. The protein localises to the cell projection. It localises to the axon. It is found in the nucleus. In terms of biological role, essential signaling protein which has a major role in germline and embryonic development; involved in cell fate decisions that require cell-cell interactions. Probable membrane-bound receptor for putative ligands lag-2 and apx-1. Upon ligand activation, and releasing from the cell membrane, the glp-1/Notch intracellular domain (NICD) probably forms a transcriptional activator complex with lag-1 and lag-3 and regulates expression of various genes; targets in the germline include lst-1 and sygl-1. Involved in the specification of the cell fates of the blastomeres, ABa and ABp. Proper signaling by glp-1 induces ABa descendants to produce anterior pharyngeal cells, and ABp descendants to adopt a different fate. Contributes to the establishment of the dorsal-ventral axis in early embryos. Required in postmitotic neurons in order to maintain the developmentally arrested larval state known as dauer, probably in response to lag-2. Regulates germ cell mitotic proliferation probably by regulating MAP kinase phosphatase lip-1 expression. Required for oocyte growth control. Plays a negative role in lifespan. The polypeptide is Protein glp-1 (Caenorhabditis elegans).